The following is a 242-amino-acid chain: GLIPR1-like protein 1 (242 aa).

The N-terminal stretch at 1–22 (MALKNKFSCLWILGLCLVATTS) is a signal peptide. An SCP domain is found at 39 to 171 (EAHNEWRGKV…ASTAIFVCNY (133 aa)). Asn119 is a glycosylation site (N-linked (GlcNAc...) asparagine). A lipid anchor (GPI-anchor amidated glycine) is attached at Gly221. Residues 222-242 (RAPQQTAFNPFSLGFLLLRIF) constitute a propeptide, removed in mature form.

Belongs to the CRISP family. In terms of assembly, part of a oolemmal binding multimeric complex (IZUMO1 complex) composed at least of IZUMO1 and GLIPR1L1; the complex assemblage is influenced by the maturation status of the male germ cell. Interacts with IZUMO1. In terms of processing, N-glycosylated. N-glycosylation decreases during the transit in the caput. In terms of tissue distribution, highly expressed in testis.

It is found in the cytoplasmic vesicle. The protein localises to the secretory vesicle. The protein resides in the acrosome. Its subcellular location is the cell membrane. It localises to the membrane raft. It is found in the secreted. Required for optimal fertilization at the stage of sperm-oocyte fusion, plays a role in optimizing acrosome function, the translocation of IZUMO1 during the acrosome reaction and the fertilization process. Component of epididymosomes, one type of membranous microvesicules which mediate the transfer of lipids and proteins to spermatozoa plasma membrane during epididymal maturation. Also component of the CD9-positive microvesicules found in the cauda region. This Homo sapiens (Human) protein is GLIPR1-like protein 1 (GLIPR1L1).